The primary structure comprises 275 residues: MHSSPSAGKQRVALVMQYLGTHFHGWQRQPNFSSIQEEVELAIAKVVGQPVTLHGAGRTDAGVHAAAQVAHFDDPVGQIPPHRWSKILNGHLPQDIIVRGSAAVDSHWHARFSALWRRYRYSIYTDQWPNLFADQFSWHYYRFPLQEKTIQAAMEPLLGKHHLAAFHRAGSARRHSWVEVQGVECYRRGPMVYLEIQANGFLYGMVRLLVGMLAEVGSGQRSLTDFNDIWVNQRRDLVKYAAPAKGLCLLRVGYENFPLPDSLWFDSQPLWQFTG.

The Nucleophile role is filled by Asp60. Tyr119 contacts substrate.

Belongs to the tRNA pseudouridine synthase TruA family. In terms of assembly, homodimer.

The catalysed reaction is uridine(38/39/40) in tRNA = pseudouridine(38/39/40) in tRNA. In terms of biological role, formation of pseudouridine at positions 38, 39 and 40 in the anticodon stem and loop of transfer RNAs. The chain is tRNA pseudouridine synthase A from Synechocystis sp. (strain ATCC 27184 / PCC 6803 / Kazusa).